The primary structure comprises 743 residues: Type VI secretion system spike protein VgrG1 (743 aa).

It belongs to the VgrG protein family.

The protein resides in the secreted. It catalyses the reaction L-arginyl-[protein] + NAD(+) = N(omega)-(ADP-D-ribosyl)-L-arginyl-[protein] + nicotinamide + H(+). Part of the type VI secretion system specialized secretion system, which delivers several virulence factors in both prokaryotic and eukaryotic cells during infection. Acts directly as an secreted effector with an actin ADP-ribosyltransferase activity that disrupts the host actin cytoskeleton, leading to a decrease in host cell viability and an increase in apoptosis. This chain is Type VI secretion system spike protein VgrG1 (vgrG1), found in Aeromonas hydrophila subsp. hydrophila (strain ATCC 7966 / DSM 30187 / BCRC 13018 / CCUG 14551 / JCM 1027 / KCTC 2358 / NCIMB 9240 / NCTC 8049).